The following is a 93-amino-acid chain: UPF0369 protein RC0209 (93 aa).

Residues 1 to 24 (MDDKKDNRHLSKPAYREECTGDTE) are disordered. The RPE1 insert domain occupies 8–55 (RHLSKPAYREECTGDTERSTTAYMDILEDVSTGSTSKLPLEAKFVKIS).

Belongs to the SDHAF4 family.

The sequence is that of UPF0369 protein RC0209 from Rickettsia conorii (strain ATCC VR-613 / Malish 7).